The sequence spans 176 residues: Large ribosomal subunit protein uL6 (176 aa).

The protein belongs to the universal ribosomal protein uL6 family. Part of the 50S ribosomal subunit.

Functionally, this protein binds to the 23S rRNA, and is important in its secondary structure. It is located near the subunit interface in the base of the L7/L12 stalk, and near the tRNA binding site of the peptidyltransferase center. This Paraburkholderia phytofirmans (strain DSM 17436 / LMG 22146 / PsJN) (Burkholderia phytofirmans) protein is Large ribosomal subunit protein uL6.